Consider the following 85-residue polypeptide: Large ribosomal subunit protein bL27 (85 aa).

Residues 1–22 are disordered; it reads MAHKKAGGSTRNGRDSESKRLG.

This sequence belongs to the bacterial ribosomal protein bL27 family.

The protein is Large ribosomal subunit protein bL27 of Vibrio parahaemolyticus serotype O3:K6 (strain RIMD 2210633).